The primary structure comprises 429 residues: Histidine--tRNA ligase (429 aa).

This sequence belongs to the class-II aminoacyl-tRNA synthetase family. In terms of assembly, homodimer.

It localises to the cytoplasm. It carries out the reaction tRNA(His) + L-histidine + ATP = L-histidyl-tRNA(His) + AMP + diphosphate + H(+). In Streptococcus pneumoniae (strain JJA), this protein is Histidine--tRNA ligase.